Consider the following 353-residue polypeptide: Quinolinate synthase (353 aa).

Iminosuccinate-binding residues include His-47 and Ser-68. Cys-113 contacts [4Fe-4S] cluster. Residues 139-141 (YAN) and Ser-156 contribute to the iminosuccinate site. Cys-200 is a binding site for [4Fe-4S] cluster. Residues 226-228 (HPE) and Thr-243 each bind iminosuccinate. Cys-297 is a binding site for [4Fe-4S] cluster.

This sequence belongs to the quinolinate synthase family. Type 1 subfamily. It depends on [4Fe-4S] cluster as a cofactor.

The protein localises to the cytoplasm. The catalysed reaction is iminosuccinate + dihydroxyacetone phosphate = quinolinate + phosphate + 2 H2O + H(+). Its pathway is cofactor biosynthesis; NAD(+) biosynthesis; quinolinate from iminoaspartate: step 1/1. Functionally, catalyzes the condensation of iminoaspartate with dihydroxyacetone phosphate to form quinolinate. This chain is Quinolinate synthase, found in Serratia proteamaculans (strain 568).